Consider the following 76-residue polypeptide: Large ribosomal subunit protein uL29 (76 aa).

It belongs to the universal ribosomal protein uL29 family.

The protein is Large ribosomal subunit protein uL29 of Corynebacterium diphtheriae (strain ATCC 700971 / NCTC 13129 / Biotype gravis).